The sequence spans 155 residues: UPF0178 protein mlr0875 (155 aa).

Belongs to the UPF0178 family.

This is UPF0178 protein mlr0875 from Mesorhizobium japonicum (strain LMG 29417 / CECT 9101 / MAFF 303099) (Mesorhizobium loti (strain MAFF 303099)).